Here is a 233-residue protein sequence, read N- to C-terminus: Aquaglyceroporin AqpS (233 aa).

Transmembrane regions (helical) follow at residues 11–31 (VAEA…GIMA) and 40–60 (LALV…VTIL). Positions 69 to 71 (NPA) match the NPA 1 motif. The next 3 helical transmembrane spans lie at 89-109 (AYVI…HLMF), 125-145 (AQWL…LAGI), and 152-172 (VPWL…STSF). An NPA 2 motif is present at residues 174-176 (NPA). Residues 193–213 (GDLPGFVIAELLGAVCALALM) form a helical membrane-spanning segment.

This sequence belongs to the MIP/aquaporin (TC 1.A.8) family. NIP (TC 1.A.8.12) subfamily.

Its subcellular location is the cell inner membrane. Involved in resistance to arsenic. Facilitates efflux of arsenite [As(III)]. Arsenate [As(V)] enters the cell through phosphate transport systems and is reduced to arsenite by the arsenate reductase ArsC. Internally generated arsenite flows out of the cell by downhill movement through AqpS. Can also transport the highly toxic methylarsenite [MAs(III)] and the relatively non-toxic methylarsenate [MAs(V)]. May be a component of an methylarsenite resistance pathway in which methylarsenite enters cells via AqpS, is oxidized by ArsH to methylarsenate, which exits the cells via AqpS. This pathway may confer a selective advantage for R.melliloti to grow in the presence of environmental methylarsenicals. The protein is Aquaglyceroporin AqpS of Rhizobium meliloti (strain 1021) (Ensifer meliloti).